We begin with the raw amino-acid sequence, 189 residues long: NADH-quinone oxidoreductase subunit B (189 aa).

[4Fe-4S] cluster contacts are provided by cysteine 39, cysteine 40, cysteine 104, and cysteine 135.

It belongs to the complex I 20 kDa subunit family. In terms of assembly, NDH-1 is composed of 14 different subunits. Subunits NuoB, C, D, E, F, and G constitute the peripheral sector of the complex. [4Fe-4S] cluster serves as cofactor.

The protein localises to the cell inner membrane. The enzyme catalyses a quinone + NADH + 5 H(+)(in) = a quinol + NAD(+) + 4 H(+)(out). In terms of biological role, NDH-1 shuttles electrons from NADH, via FMN and iron-sulfur (Fe-S) centers, to quinones in the respiratory chain. The immediate electron acceptor for the enzyme in this species is believed to be a menaquinone. Couples the redox reaction to proton translocation (for every two electrons transferred, four hydrogen ions are translocated across the cytoplasmic membrane), and thus conserves the redox energy in a proton gradient. The sequence is that of NADH-quinone oxidoreductase subunit B from Chlorobaculum tepidum (strain ATCC 49652 / DSM 12025 / NBRC 103806 / TLS) (Chlorobium tepidum).